We begin with the raw amino-acid sequence, 361 residues long: Alternative oxidase, mitochondrial (361 aa).

Residues Tyr156 to Arg178 form a helical membrane-spanning segment. 3 residues coordinate Fe cation: Glu164, Glu203, and His206. The helical transmembrane segment at Trp218–Leu240 threads the bilayer. Fe cation is bound by residues Glu254, Glu309, and His312. A compositionally biased stretch (polar residues) spans Thr318–Pro328. The segment at Thr318 to Met361 is disordered. Basic and acidic residues predominate over residues Pro343–Met361.

This sequence belongs to the alternative oxidase family. Fe cation is required as a cofactor.

The protein resides in the mitochondrion inner membrane. Functionally, catalyzes cyanide-resistant oxygen consumption. May increase respiration when the cytochrome respiratory pathway is restricted, or in response to low temperatures. In Venturia inaequalis (Apple scab fungus), this protein is Alternative oxidase, mitochondrial (AOX1).